Here is a 916-residue protein sequence, read N- to C-terminus: MGTETVSKPVMDNGSGDSDDDKPLAFKRNNTVASNSNQSKSNSQRSKAVPTTKVSPMRSPVTSPNGTTPSNKTSIVKSSMPSSSSKASPAKSPLRNDMPSTVKDRSQLQKDQSECKIEHEDSEDDRPLSSILSGNKGPTSSRQVSSPQPEKKNNGDRPLDRASRIIKDESDDETPISSMFRKKIDSGMSGGNQLSNDEKKPLVQKLHQNGSTVKNEVPNGKVLGKRPLEKNSSADQSSLKKAKISASPTSVKMKQDSVKKEIDDKGRVLVSPKMKAKQLSTREDGTDDDDDDDVPISKRFKSDSSNSNTSSAKPKAVKLNSTSSAAKPKARNVVSPRSRAMTKNTKKVTKDSKYSTSSKSSPSSGDGQKKWTTLVHNGVIFPPPYKPHGIKILYKGKPVDLTIEQEEVATMFAVMRETDYYTKPQFRENFWNDWRRLLGKKHVIQKLDDCDFTPIYEWHLEEKEKKKQMSTEEKKALKEEKMKQEEKYMWAVVDGVKEKIGNFRVEPPGLFRGRGEHPKMGKLKKRIHPCEITLNIGKGAPIPECPIAGERWKEVKHDNTVTWLAFWADPINPKEFKYVFLGAGSSLKGLSDKEKYEKARNLTDHIDNIRTTYTKNFTAKDVKMRQIAVATYLIDKLALRAGNEKDDDEADTVGCCTLKVGNVECIPPNKIKFDFLGKDSIQYVNTVEVEPLVYKAIGQFQAGKSKTDDLFDELDTSKLNAHLKELVPGLTAKVFRTYNASITLDEMLSQETKDGDVTQKIVVYQKANKEVAIICNHQRTVSKTHGAQIEKLTARIEELKEVLKELKTNLDRAKKGKPPLEGSDGKKIRSLEPNAWEKKIAQQSAKIEKMERDMHTKEDLKTVALGTSKINYLDPRITVAWCKRHEVPIEKIFTKSLLEKFAWAMDVEPEYRFSRR.

A disordered region spans residues Met1–Lys369. The segment covering Ser34–Lys47 has biased composition (low complexity). The span at Pro60–Val76 shows a compositional bias: polar residues. Positions Lys77–Pro93 are enriched in low complexity. The segment covering Val102 to His119 has biased composition (basic and acidic residues). Over residues Ser130–Gln148 the composition is skewed to polar residues. Positions Pro149–Asp168 are enriched in basic and acidic residues. Residue Ser170 is modified to Phosphoserine. The segment covering Lys230–Leu239 has biased composition (polar residues). Over residues Met253–Arg267 the composition is skewed to basic and acidic residues. Residues Gly285–Val294 show a composition bias toward acidic residues. Thr286 carries the phosphothreonine modification. The segment covering Tyr354 to Asp366 has biased composition (low complexity). Interaction with DNA regions lie at residues Lys577–Tyr578, Arg640–Lys645, and Thr731–Lys733. The 331-residue stretch at Gly584–Ser914 folds into the Topo IB-type catalytic domain. A coiled-coil region spans residues Gln778–Leu860. Tyr872 serves as the catalytic O-(3'-phospho-DNA)-tyrosine intermediate.

The protein belongs to the type IB topoisomerase family. Interacts with DEK3. As to expression, expressed in inflorescence meristems. Expressed in primordia of sepals, petals, stamens, carpels and ovules. Expressed in midstage embryos.

It localises to the nucleus. The catalysed reaction is ATP-independent breakage of single-stranded DNA, followed by passage and rejoining.. Its function is as follows. Releases the supercoiling and torsional tension of DNA introduced during the DNA replication and transcription by transiently cleaving and rejoining one strand of the DNA duplex. Introduces a single-strand break via transesterification at a target site in duplex DNA. The scissile phosphodiester is attacked by the catalytic tyrosine of the enzyme, resulting in the formation of a DNA-(3'-phosphotyrosyl)-enzyme intermediate and the expulsion of a 5'-OH DNA strand. The free DNA strand then rotates around the intact phosphodiester bond on the opposing strand, thus removing DNA supercoils. Finally, in the religation step, the DNA 5'-OH attacks the covalent intermediate to expel the active-site tyrosine and restore the DNA phosphodiester backbone. Can complement a TOP1-deficient yeast mutant. Plays a critical role in the maintenance of a regular pattern of organ initiation. Topoisomerases I enzymes (TOP1A and TOP1B) are essential for plant survival. Functions together with the stem cell maintenance gene WUSCHEL (WUS) in stem cell regulation. Required to maintain developmentally regulated gene repression. Functions synergistically with chromatin remodeling factors. Is required for the repression of WUS expression in flower development. Plays a role in polycomb group (PcG) protein-mediated histone H3 trimethylation on 'Lys-27' (H3K27me3) at the WUS gene locus. H3K27me3 induces transcriptional repression of WUS. May assist AGAMOUS (AG) in recruiting PcG proteins to WUS locus. Reduces nucleosome density, especially at genes that are targets of PcG proteins. Plays a role in epigenetic silencing. Involved in RNA-directed DNA methylation (RdDM) by promoting Pol V transcription to generate long non-coding RNA transcripts. Is dispensable for Pol IV-mediated small interfering RNA (siRNA) biogenesis. Promotes transposable element (TE) silencing at endogenous RdDM target loci through histone H3 dimethylation of 'Lys-9' (H3K9me2). Promotes the production of Pol V-dependent long non-coding transcripts that facilitate the recruitment of siRNA-AGO4 and AGO4 occupancy at TEs. The polypeptide is DNA topoisomerase 1 alpha (Arabidopsis thaliana (Mouse-ear cress)).